A 932-amino-acid polypeptide reads, in one-letter code: Protein hir1 (932 aa).

WD repeat units follow at residues 16 to 55, 72 to 111, 132 to 171, 174 to 213, 222 to 265, 268 to 316, and 320 to 361; these read GHRL…RENE, THTG…PGLG, GHDN…RLKR, AHQS…IEKT, PLST…SEIN, GHEG…PLLS, and VFQK…DMVS. 2 stretches are compositionally biased toward polar residues: residues 405–426 and 441–453; these read STTD…QKTP and TVDT…SKEQ. 2 disordered regions span residues 405-470 and 498-520; these read STTD…NEIP and TPST…LPPQ. Residues 498-507 show a composition bias toward low complexity; it reads TPSTSRLAST.

It belongs to the WD repeat HIR1 family. As to quaternary structure, interacts with his3 and slm9.

It is found in the cytoplasm. It localises to the nucleus. Probably required for replication-independent chromatin assembly. Required for transcriptional silencing in the outer repeat (otr) centromeric repeats and the Tf2 long terminal repeat retrotransposons. Repressor of histone gene transcription in G1 arrested cells. Required for repression of htb1 gene expression outside of S phase. This Schizosaccharomyces pombe (strain 972 / ATCC 24843) (Fission yeast) protein is Protein hir1 (hip1).